The primary structure comprises 266 residues: Translation initiation factor 2 subunit alpha (266 aa).

An S1 motif domain is found at 12–83 (GEILIATVKQ…RKGTVDVSLK (72 aa)).

The protein belongs to the eIF-2-alpha family. In terms of assembly, heterotrimer composed of an alpha, a beta and a gamma chain.

EIF-2 functions in the early steps of protein synthesis by forming a ternary complex with GTP and initiator tRNA. This is Translation initiation factor 2 subunit alpha from Saccharolobus islandicus (strain L.S.2.15 / Lassen #1) (Sulfolobus islandicus).